Here is a 393-residue protein sequence, read N- to C-terminus: 4-hydroxyphenylpyruvate dioxygenase (393 aa).

Threonine 2 carries the N-acetylthreonine modification. 2 VOC domains span residues 18–149 and 180–338; these read HFHS…LVEK and IIDH…IFTK. Lysine 132 is modified (N6-succinyllysine). Histidine 183 is a binding site for Fe cation. A phosphoserine mark is found at serine 211, serine 226, and serine 250. Fe cation is bound by residues histidine 266 and glutamate 349.

It belongs to the 4HPPD family. Homodimer. The cofactor is Fe cation.

The protein localises to the cytoplasm. Its subcellular location is the endoplasmic reticulum membrane. It localises to the golgi apparatus membrane. The enzyme catalyses 3-(4-hydroxyphenyl)pyruvate + O2 = homogentisate + CO2. It functions in the pathway amino-acid degradation; L-phenylalanine degradation; acetoacetate and fumarate from L-phenylalanine: step 3/6. In terms of biological role, catalyzes the conversion of 4-hydroxyphenylpyruvic acid to homogentisic acid, one of the steps in tyrosine catabolism. The protein is 4-hydroxyphenylpyruvate dioxygenase (Hpd) of Mus musculus (Mouse).